Here is a 216-residue protein sequence, read N- to C-terminus: Probable glutamine ABC transporter permease protein GlnM (216 aa).

In terms of domain architecture, ABC transmembrane type-1 spans 17 to 205 (FYHTLLASVI…VLTIPLSIGV (189 aa)). Transmembrane regions (helical) follow at residues 21–41 (LLAS…VAVM), 63–83 (IPLL…GLRL), 85–105 (GFQA…AEAI), 132–152 (LHII…NQFL), and 181–201 (LVVF…TIPL).

It belongs to the binding-protein-dependent transport system permease family. In terms of assembly, the complex is composed of two ATP-binding proteins (GlnQ), two transmembrane proteins (GlnM and GlnP) and a solute-binding protein (GlnH).

Its subcellular location is the cell membrane. In terms of biological role, part of the ABC transporter complex GlnHMPQ involved in glutamine transport. Probably responsible for the translocation of the substrate across the membrane. The protein is Probable glutamine ABC transporter permease protein GlnM (glnM) of Bacillus subtilis (strain 168).